The primary structure comprises 363 residues: 3-dehydroquinate synthase (363 aa).

NAD(+) contacts are provided by residues 103–107, 127–128, lysine 139, lysine 148, and 166–169; these read GAVGD, TT, and FSET. Zn(2+) contacts are provided by glutamate 181, histidine 243, and histidine 260.

This sequence belongs to the sugar phosphate cyclases superfamily. Dehydroquinate synthase family. Co(2+) is required as a cofactor. It depends on Zn(2+) as a cofactor. Requires NAD(+) as cofactor.

Its subcellular location is the cytoplasm. It catalyses the reaction 7-phospho-2-dehydro-3-deoxy-D-arabino-heptonate = 3-dehydroquinate + phosphate. The protein operates within metabolic intermediate biosynthesis; chorismate biosynthesis; chorismate from D-erythrose 4-phosphate and phosphoenolpyruvate: step 2/7. In terms of biological role, catalyzes the conversion of 3-deoxy-D-arabino-heptulosonate 7-phosphate (DAHP) to dehydroquinate (DHQ). In Lysinibacillus sphaericus (strain C3-41), this protein is 3-dehydroquinate synthase.